We begin with the raw amino-acid sequence, 392 residues long: 4-hydroxybenzoate polyprenyltransferase, mitochondrial (392 aa).

The N-terminal 22 residues, 1–22 (MYALRHLRLQSARHFRSSYAAA), are a transit peptide targeting the mitochondrion. 9 consecutive transmembrane segments (helical) span residues 90–110 (IGTYLLFWPCAWSIALSADAG), 115–135 (LTMLGLFGTGALIMRGAGCTI), 163–183 (FDAIVFLSAQLSLGLLVLVQL), 184–204 (NWQSILLGASSLGLVITYPLM), 207–227 (VTYWPQLVLGMAFNWGALLGW), 236–256 (LAACLPLYLSGVCWTIVYDTI), 283–303 (VWLSGFTAAMLTGLSAAGWAC), 307–327 (VPYYAAVGVVGAHLVQQIYSL), and 339–359 (FISNHQVGLILFLGIVLGTLL). A disordered region spans residues 365–392 (KKQRQSSLTTSTASSYVPALPQKPEVLS). Polar residues predominate over residues 369-379 (QSSLTTSTASS).

The protein belongs to the UbiA prenyltransferase family. Mg(2+) is required as a cofactor.

It is found in the mitochondrion inner membrane. It catalyses the reaction an all-trans-polyprenyl diphosphate + 4-hydroxybenzoate = a 4-hydroxy-3-(all-trans-polyprenyl)benzoate + diphosphate. The protein operates within cofactor biosynthesis; ubiquinone biosynthesis. In terms of biological role, catalyzes the prenylation of para-hydroxybenzoate (PHB) with an all-trans polyprenyl group. Mediates the second step in the final reaction sequence of coenzyme Q (CoQ) biosynthesis, which is the condensation of the polyisoprenoid side chain with PHB, generating the first membrane-bound Q intermediate. In Drosophila melanogaster (Fruit fly), this protein is 4-hydroxybenzoate polyprenyltransferase, mitochondrial.